A 717-amino-acid polypeptide reads, in one-letter code: DNA ligase (717 aa).

Residues 41–45 (DARYD), 90–91 (SL), and Glu124 each bind NAD(+). Lys126 acts as the N6-AMP-lysine intermediate in catalysis. Residues Arg147, Glu183, Lys299, and Lys323 each coordinate NAD(+). Residues Cys428, Cys431, Cys446, and Cys452 each coordinate Zn(2+). A BRCT domain is found at 636–717 (ADYSPVAGKT…WLQLINEHHI (82 aa)).

It belongs to the NAD-dependent DNA ligase family. LigA subfamily. It depends on Mg(2+) as a cofactor. Mn(2+) serves as cofactor.

It carries out the reaction NAD(+) + (deoxyribonucleotide)n-3'-hydroxyl + 5'-phospho-(deoxyribonucleotide)m = (deoxyribonucleotide)n+m + AMP + beta-nicotinamide D-nucleotide.. Its function is as follows. DNA ligase that catalyzes the formation of phosphodiester linkages between 5'-phosphoryl and 3'-hydroxyl groups in double-stranded DNA using NAD as a coenzyme and as the energy source for the reaction. It is essential for DNA replication and repair of damaged DNA. The sequence is that of DNA ligase from Bartonella bacilliformis (strain ATCC 35685 / KC583 / Herrer 020/F12,63).